We begin with the raw amino-acid sequence, 470 residues long: Histidine--tRNA ligase (470 aa).

A disordered region spans residues glycine 69–glutamate 99. Over residues glutamine 79 to glycine 94 the composition is skewed to basic and acidic residues.

The protein belongs to the class-II aminoacyl-tRNA synthetase family. In terms of assembly, homodimer.

Its subcellular location is the cytoplasm. The catalysed reaction is tRNA(His) + L-histidine + ATP = L-histidyl-tRNA(His) + AMP + diphosphate + H(+). The protein is Histidine--tRNA ligase of Nostoc punctiforme (strain ATCC 29133 / PCC 73102).